Reading from the N-terminus, the 236-residue chain is Sugar fermentation stimulation protein homolog (236 aa).

This sequence belongs to the SfsA family.

The sequence is that of Sugar fermentation stimulation protein homolog from Desulfotalea psychrophila (strain LSv54 / DSM 12343).